Reading from the N-terminus, the 790-residue chain is Pentatricopeptide repeat-containing protein OTP51, chloroplastic (790 aa).

A chloroplast-targeting transit peptide spans 1 to 56; sequence MATTSPCAAPSPSLRCPLALSHPFASPPPPPALRLAGPKLLPGRLAVSPPPGIPAV. PPR repeat units lie at residues 182 to 216, 217 to 254, 256 to 296, 299 to 333, 334 to 368, 369 to 403, 404 to 438, 439 to 469, 473 to 507, and 509 to 543; these read NFALATRVADCLGRDGKVEKCREVFEAMVKQGRVP, AESTFHILIVAYLSVPKGRCLEEACTIYNQMIQMGGYK, RLSL…NLDV, DVYAGLIWLHSYQDVIDRERIIALRKEMKQAGFDE, GIDVLVSVMRAFSKEGNVAETEATWHNILQSGSDL, PVQAYVCRMEAYARTGEPMKSLDMFKEMKDKNIPP, NVASYHKIIEIMTKALEVDIVEQLMNEFIESDMKH, LMPAFLDLMYMYMDLDMHEKLELTFLKCIAR, NRILYTIYLESLVKVGNIEKAEEVFGEMHNNGMIG, and NTKSCNIMLRGYLSAEDYQKAEKVYDMMSKKKYDV. Positions 762–790 are disordered; that stretch reads GSSIGSDGTQDTDTDSDDDMQMSDTERDE. Positions 771 to 790 are enriched in acidic residues; that stretch reads QDTDTDSDDDMQMSDTERDE.

This sequence belongs to the PPR family. P subfamily.

The protein localises to the plastid. It localises to the chloroplast. In terms of biological role, promotes the splicing of group II introns in chloroplasts. Required for the splicing of intron 2 of plastid ycf3 transcripts, a factor required for the assembly of photosystem I (PSI). Involved in the splicing of atpF, ndhA, petB and rps16 chloroplastic transcripts. Required for the assembly of PSI. This Oryza sativa subsp. japonica (Rice) protein is Pentatricopeptide repeat-containing protein OTP51, chloroplastic.